The following is an 86-amino-acid chain: Small muscular protein (86 aa).

The disordered stretch occupies residues 20–64; sequence MGAFRPGAGQPPRKKECTPETEEAVLPTSDEEKKPIPGAKKLPGP.

It belongs to the SMPX family. As to expression, high level of expression found in the heart and skeletal muscle, a very low expression in the lung and spleen and no expression found in the liver, kidney, fat and brain.

In terms of biological role, plays a role in the regulatory network through which muscle cells coordinate their structural and functional states during growth, adaptation, and repair. The polypeptide is Small muscular protein (SMPX) (Sus scrofa (Pig)).